The chain runs to 1170 residues: Anion exchange protein 3 (1170 aa).

Topologically, residues 1–656 (MGRSYNEKDF…DLKDALDTQC (656 aa)) are cytoplasmic. Disordered stretches follow at residues 17 to 96 (FHHT…PQLS), 112 to 167 (FHME…TTRG), and 239 to 267 (HLVKKSSRCQLPRSSNGSPPLSSLKRRKR). Residues 32 to 53 (RFRKRVLSMDRRRKRKRKKKKT) show a composition bias toward basic residues. The span at 67–76 (VDEEEAESEI) shows a compositional bias: acidic residues. The span at 246–259 (RCQLPRSSNGSPPL) shows a compositional bias: polar residues. 5 consecutive transmembrane segments (helical) span residues 657-677 (IAAVIFIYFAALSPTITFGGL), 702-722 (FSLLAGQPLLIIGFSGPLLVF), 744-764 (IGFWLIFIVLVIVAAEGSFLV), 774-794 (IFAFLISLIFIYETFSKLIKV), and 828-848 (PNTALLSMVLMMGTFFTAFFL). The interval 657–1170 (IAAVIFIYFA…DEYNEIHMLV (514 aa)) is membrane (anion exchange). Residues 849 to 863 (RKLRNSRFLGGKVRR) lie on the Cytoplasmic side of the membrane. 5 consecutive transmembrane segments (helical) span residues 864–884 (VIGDFGIPISILISVLVDILI), 919–939 (FPVWMMGASVIPALLVFILIF), 966–986 (LLLIVTLGAICPLFGLPWLTA), 1020–1063 (RVTG…LTGI), and 1104–1124 (IVLLWVVKSTVASLAFPFILI).

Belongs to the anion exchanger (TC 2.A.31) family. As to expression, widely expressed at low levels.

It is found in the cell membrane. It carries out the reaction hydrogencarbonate(in) + chloride(out) = hydrogencarbonate(out) + chloride(in). In terms of biological role, sodium-independent anion exchanger which mediates the electroneutral exchange of chloride for bicarbonate ions across the cell membrane. May be involved in the regulation of intracellular pH, and the modulation of cardiac action potential. The sequence is that of Anion exchange protein 3 from Danio rerio (Zebrafish).